Here is a 330-residue protein sequence, read N- to C-terminus: MKKSFIHQQEEISFVKNTFTQYLIAKLDVVEVQGPILSRVGDGMQDNLSGIENPVSVNVLKIPEAQFEVVHSLAKWKRHTLARFGFNEGEGLVVNMKALRPDEDSLDQTHSVYVDQWDWEKVIPDGKRNLAYLKETVETIYKVIRLTELAVEARYDIEAILPKKITFIHTEDLVKRYPDLSPKERENAITKEFGAVFLIGIGGELSDGKPHDGRAPDYDDWTSETEDGYHGLNGDILVWNEQLQSAFELSSMGIRVDEDALKRQVAITGDFDRLEFDWHKSLLNGLFPLTIGGGIGQSRMAMFLLRKKHIGEVQTSVWPQSVRESFDNIL.

This sequence belongs to the class-II aminoacyl-tRNA synthetase family. AsnA subfamily.

Its subcellular location is the cytoplasm. The catalysed reaction is L-aspartate + NH4(+) + ATP = L-asparagine + AMP + diphosphate + H(+). Its pathway is amino-acid biosynthesis; L-asparagine biosynthesis; L-asparagine from L-aspartate (ammonia route): step 1/1. In Streptococcus uberis (strain ATCC BAA-854 / 0140J), this protein is Aspartate--ammonia ligase.